A 392-amino-acid chain; its full sequence is Quinolinate synthase (392 aa).

The segment at 1–23 is disordered; it reads MVDLPTTTPPAQPTTGNDEVDAL. 2 residues coordinate iminosuccinate: His57 and Ser74. Position 131 (Cys131) interacts with [4Fe-4S] cluster. Iminosuccinate contacts are provided by residues 163 to 165 and Ser184; that span reads YIN. Position 254 (Cys254) interacts with [4Fe-4S] cluster. Iminosuccinate is bound by residues 280–282 and Thr297; that span reads HPE. [4Fe-4S] cluster is bound at residue Cys344.

It belongs to the quinolinate synthase family. Type 3 subfamily. It depends on [4Fe-4S] cluster as a cofactor.

The protein resides in the cytoplasm. The enzyme catalyses iminosuccinate + dihydroxyacetone phosphate = quinolinate + phosphate + 2 H2O + H(+). It functions in the pathway cofactor biosynthesis; NAD(+) biosynthesis; quinolinate from iminoaspartate: step 1/1. Its function is as follows. Catalyzes the condensation of iminoaspartate with dihydroxyacetone phosphate to form quinolinate. The protein is Quinolinate synthase of Rhodopirellula baltica (strain DSM 10527 / NCIMB 13988 / SH1).